Here is a 232-residue protein sequence, read N- to C-terminus: uncharacterized protein (232 aa).

A helical membrane pass occupies residues 10–32 (GLTIYLYPVIAWIILVTKIESGL).

The protein resides in the membrane. This is an uncharacterized protein from Archaeoglobus fulgidus (strain ATCC 49558 / DSM 4304 / JCM 9628 / NBRC 100126 / VC-16).